The following is a 162-amino-acid chain: Troponin C, skeletal muscle (162 aa).

Ala1 carries the N-acetylalanine modification. EF-hand domains follow at residues 17 to 52, 53 to 88, 93 to 128, and 129 to 162; these read EMIA…LGQT, PTKE…QMKE, KSEE…SGES, and ITDE…EGVQ. Ca(2+)-binding residues include Asp30, Asp32, Asp36, Glu41, Asp66, Asp68, Ser70, Thr72, Glu77, Asp106, Asn108, Asp110, Tyr112, Glu117, Asp142, Asn144, Asp146, Lys148, and Glu153.

The protein belongs to the troponin C family.

Its function is as follows. Troponin is the central regulatory protein of striated muscle contraction. Tn consists of three components: Tn-I which is the inhibitor of actomyosin ATPase, Tn-T which contains the binding site for tropomyosin and Tn-C. The binding of calcium to Tn-C abolishes the inhibitory action of Tn on actin filaments. The polypeptide is Troponin C, skeletal muscle (Pelophylax lessonae (Pool frog)).